The following is a 270-amino-acid chain: Bis(5'-nucleosyl)-tetraphosphatase, symmetrical (270 aa).

The protein belongs to the Ap4A hydrolase family.

It catalyses the reaction P(1),P(4)-bis(5'-adenosyl) tetraphosphate + H2O = 2 ADP + 2 H(+). Hydrolyzes diadenosine 5',5'''-P1,P4-tetraphosphate to yield ADP. In Cellvibrio japonicus (strain Ueda107) (Pseudomonas fluorescens subsp. cellulosa), this protein is Bis(5'-nucleosyl)-tetraphosphatase, symmetrical.